The sequence spans 186 residues: Peptide deformylase (186 aa).

2 residues coordinate Fe cation: Cys-113 and His-156. Glu-157 is a catalytic residue. His-160 lines the Fe cation pocket.

This sequence belongs to the polypeptide deformylase family. Requires Fe(2+) as cofactor.

The enzyme catalyses N-terminal N-formyl-L-methionyl-[peptide] + H2O = N-terminal L-methionyl-[peptide] + formate. In terms of biological role, removes the formyl group from the N-terminal Met of newly synthesized proteins. Requires at least a dipeptide for an efficient rate of reaction. N-terminal L-methionine is a prerequisite for activity but the enzyme has broad specificity at other positions. The sequence is that of Peptide deformylase from Lactiplantibacillus plantarum (strain ATCC BAA-793 / NCIMB 8826 / WCFS1) (Lactobacillus plantarum).